A 353-amino-acid chain; its full sequence is MNRREIAINKLKSLGDVILDDVTQGRIPRIKVPSRGTSNIIYDEDKRHYVLGDRYGTRSMGNVKQIKKIGQMLYTANFCKDLVAREKTATLRELYYISEGWEVDFADQQESNIVGEDLEVTLGMTREELGLMPEEDGASVYGALTVREGDIEIDALRSGKSGYNISPTIDEVEFVDHDVERVIAVETMGMFHRLVQEKAYKKFDALIVGLKGQAARATRRFIKRVNEELNLPVYICNDGDPWGFHIAMVIISGSAKLAHVNHQLATPDAKFLGVTASDIINYDLPTDPLKDVDVVRLKELLQDPRYRGDFWKTEIKKMLTIGKKAEQQSFSKYGLEYVVDTYLPEKLEAVENQ.

One can recognise a Topo IIA-type catalytic domain in the interval 2-138; that stretch reads NRREIAINKL…LGLMPEEDGA (137 aa). The O-(5'-phospho-DNA)-tyrosine intermediate role is filled by Tyr96. Mg(2+)-binding residues include Glu186 and Asp238.

Belongs to the TOP6A family. As to quaternary structure, homodimer. Heterotetramer of two Top6A and two Top6B chains. It depends on Mg(2+) as a cofactor.

It catalyses the reaction ATP-dependent breakage, passage and rejoining of double-stranded DNA.. Relaxes both positive and negative superturns and exhibits a strong decatenase activity. This is Type 2 DNA topoisomerase 6 subunit A from Methanothermobacter thermautotrophicus (strain ATCC 29096 / DSM 1053 / JCM 10044 / NBRC 100330 / Delta H) (Methanobacterium thermoautotrophicum).